Consider the following 309-residue polypeptide: Ornithine carbamoyltransferase (309 aa).

Carbamoyl phosphate is bound by residues 51-54 (STRT), Q78, R102, and 129-132 (HPVQ). Residues N160, D224, and 228-229 (SM) contribute to the L-ornithine site. Residues 264-265 (CL) and R292 contribute to the carbamoyl phosphate site.

It belongs to the aspartate/ornithine carbamoyltransferase superfamily. OTCase family.

It localises to the cytoplasm. It carries out the reaction carbamoyl phosphate + L-ornithine = L-citrulline + phosphate + H(+). It functions in the pathway amino-acid biosynthesis; L-arginine biosynthesis; L-arginine from L-ornithine and carbamoyl phosphate: step 1/3. Its function is as follows. Reversibly catalyzes the transfer of the carbamoyl group from carbamoyl phosphate (CP) to the N(epsilon) atom of ornithine (ORN) to produce L-citrulline. The protein is Ornithine carbamoyltransferase of Campylobacter fetus subsp. fetus (strain 82-40).